Consider the following 167-residue polypeptide: NADH-quinone oxidoreductase subunit B 2 (167 aa).

[4Fe-4S] cluster is bound by residues Cys38, Cys39, Cys103, and Cys132.

Belongs to the complex I 20 kDa subunit family. In terms of assembly, NDH-1 is composed of 14 different subunits. Subunits NuoB, C, D, E, F, and G constitute the peripheral sector of the complex. It depends on [4Fe-4S] cluster as a cofactor.

Its subcellular location is the cell inner membrane. The enzyme catalyses a quinone + NADH + 5 H(+)(in) = a quinol + NAD(+) + 4 H(+)(out). Functionally, NDH-1 shuttles electrons from NADH, via FMN and iron-sulfur (Fe-S) centers, to quinones in the respiratory chain. The immediate electron acceptor for the enzyme in this species is believed to be ubiquinone. Couples the redox reaction to proton translocation (for every two electrons transferred, four hydrogen ions are translocated across the cytoplasmic membrane), and thus conserves the redox energy in a proton gradient. The protein is NADH-quinone oxidoreductase subunit B 2 of Rhizobium meliloti (strain 1021) (Ensifer meliloti).